The following is a 702-amino-acid chain: Arylphorin (702 aa).

The N-terminal stretch at 1-16 (MQTVLFLAALVSLAAA) is a signal peptide. N-linked (GlcNAc...) asparagine glycans are attached at residues asparagine 211 and asparagine 481.

The protein belongs to the hemocyanin family. In terms of tissue distribution, hemolymph.

It localises to the secreted. In terms of biological role, larval storage protein (LSP) which may serve as a store of amino acids for synthesis of adult proteins. Binds the A.niger cell wall component alpha-1,3-glucan, a fungal pathogen-associated molecular pattern (PAMP) that activates the host immune response. This chain is Arylphorin (LOC113516268), found in Galleria mellonella (Greater wax moth).